The sequence spans 175 residues: Regenerating islet-derived protein 3-beta (175 aa).

A signal peptide spans 1–26; sequence MLHRLAFPVMSWMLLSCLMLLSQVQG. Positions 27-37 are excised as a propeptide; sequence EDSPKKIPSAR. 3 disulfide bridges follow: C40-C51, C68-C171, and C146-C163. The 126-residue stretch at 47 to 172 folds into the C-type lectin domain; that stretch reads YGSYCYALFQ…CEVKLPYVCK (126 aa). Position 107 (H107) interacts with Zn(2+). Positions 114–116 match the EPN motif; it reads EPN. Residue E121 participates in Zn(2+) binding.

Forms a hexameric membrane-permeabilizing oligomeric pore on membrane phospholipids. The hexamer is formed by three dimers related by helical symmetry. Forms filaments, filamentation traps pore complexes and limits damage to host cells. Interacts with EXTL3. In terms of processing, proteolytic processing by trypsin removes an inhibitory N-terminal propeptide and is essential for peptidoglycan binding and antibacterial activity. In terms of tissue distribution, constitutively expressed in intestine.

It is found in the secreted. Its activity is regulated as follows. Lipopolysaccharide inhibits pore-forming activity, explaining why is bactericidal for Gram-positive but not Gram-negative bacteria. Functionally, bactericidal C-type lectin which acts against several intestinal Gram-positive bacteria and Gram-negative bacteria. Lacks antibacterial activity against S.typhimurium. May play a role in protection against infection with S.enteritidis by inhibiting its translocation from the gut lumen into intestinal tissues and further extraintestinal tissues. Acts as a hormone in response to different stimuli. Secreted by different cell types to activate its receptor EXTL3 and induce cell specific signaling pathways. In pancreas, is able stimulate cell proliferation. This is Regenerating islet-derived protein 3-beta from Rattus norvegicus (Rat).